The primary structure comprises 379 residues: Cytokine receptor common subunit gamma (379 aa).

An N-terminal signal peptide occupies residues 1–22 (MLKPPLPLRSLLFLQLPLLGVG). The Extracellular portion of the chain corresponds to 23-269 (LNPKFLTPSG…ENIENPENPS (247 aa)). Residues Cys-68 and Cys-78 are joined by a disulfide bond. N-linked (GlcNAc...) asparagine glycosylation is found at Asn-77, Asn-81, and Asn-90. The cysteines at positions 109 and 122 are disulfide-linked. The Fibronectin type-III domain maps to 163 to 260 (APENLTLRNL…IHWGSNTSKE (98 aa)). Asn-166 and Asn-171 each carry an N-linked (GlcNAc...) asparagine glycan. Positions 244–248 (WSDWS) match the WSXWS motif motif. Residues 270–290 (LFALEAVLIPLGSMGLIVSLI) form a helical membrane-spanning segment. Residues 291–379 (CVYCWLERTM…PPCYTLKPEP (89 aa)) are Cytoplasmic-facing. Positions 299–307 (TMPRIPTLK) match the Box 1 motif motif. Thr-305 bears the Phosphothreonine mark. Residues 349-370 (PPKGGEGPGGSPCSQHSPYWAP) form a disordered region.

The protein belongs to the type I cytokine receptor family. Type 5 subfamily. As to quaternary structure, the gamma subunit is common to the IL2, IL4, IL7, IL15, IL21 and probably also the IL13 receptors. Interacts with SHB upon interleukin stimulation.

The protein localises to the cell membrane. It is found in the cell surface. In terms of biological role, common subunit for the receptors for a variety of interleukins. Probably in association with IL15RA, involved in the stimulation of neutrophil phagocytosis by IL15. The sequence is that of Cytokine receptor common subunit gamma (IL2RG) from Bos taurus (Bovine).